A 546-amino-acid polypeptide reads, in one-letter code: Nuclear pore complex protein Nup58 (546 aa).

17 repeat units span residues 22–23 (FG), 36–37 (FG), 45–46 (FG), 64–65 (FG), 73–74 (FG), 82–83 (FG), 92–93 (FG), 101–102 (FG), 110–111 (FG), 119–120 (FG), 128–129 (FG), 137–138 (FG), 146–147 (FG), 155–156 (FG), 166–167 (FG), 197–198 (FG), and 199–200 (FG). Residues 22–200 (FGARPATTTA…TTAPPAFGFG (179 aa)) are 17 X 2 AA repeats of F-G.

It belongs to the NUP58 family. In terms of assembly, component of the nuclear pore complex. Interacts with Nup54. Interacts (via C-terminus) with fs(1)Yb; this interaction occurs in a RNA-independent manner. Interacts with sbr/nxf1. Interacts with Nxt1. O-glycosylated; contains O-GlcNAc. O-GlcNAcylation increases with increasing ambient temperature.

The protein localises to the nucleus. The protein resides in the nuclear pore complex. Functionally, component of the nuclear pore complex, a complex required for the trafficking across the nuclear membrane. Together with Nup54, required for transposable element silencing regulation in ovarian follicle cells. By interacting with the nuclear (Nxf1/Nxt1) and cytosolic (fs(1)Yb) components of the flamenco (flam) transcripts processing pathway, enables export and subsequent piRNA production. The chain is Nuclear pore complex protein Nup58 from Drosophila melanogaster (Fruit fly).